Consider the following 307-residue polypeptide: Ornithine carbamoyltransferase (307 aa).

Carbamoyl phosphate contacts are provided by residues 50 to 53 (STRT), Gln77, Arg101, and 128 to 131 (HPCQ). L-ornithine contacts are provided by residues Asn160, Asp224, and 228–229 (SM). Residues 264–265 (CL) and Arg292 each bind carbamoyl phosphate.

It belongs to the aspartate/ornithine carbamoyltransferase superfamily. OTCase family.

It localises to the cytoplasm. The enzyme catalyses carbamoyl phosphate + L-ornithine = L-citrulline + phosphate + H(+). It functions in the pathway amino-acid biosynthesis; L-arginine biosynthesis; L-arginine from L-ornithine and carbamoyl phosphate: step 1/3. In terms of biological role, reversibly catalyzes the transfer of the carbamoyl group from carbamoyl phosphate (CP) to the N(epsilon) atom of ornithine (ORN) to produce L-citrulline. This chain is Ornithine carbamoyltransferase, found in Clavibacter michiganensis subsp. michiganensis (strain NCPPB 382).